A 216-amino-acid polypeptide reads, in one-letter code: Movement and silencing protein TGBp1 (216 aa).

The 110-residue stretch at 1–110 (MEFCGGTLRT…GEVRPAHFTC (110 aa)) folds into the (+)RNA virus helicase ATP-binding domain. Positions 111–216 (SHTHRFGKST…RHTDSLLILN (106 aa)) constitute a (+)RNA virus helicase C-terminal domain.

The protein belongs to the Tymovirales TGBp1 protein family. As to quaternary structure, homodimer and homooligomer. Interacts with capsid protein. Interacts with host AGO1; this interaction targets the host protein for degradation, thereby suppressing the antiviral RNA silencing.

It localises to the host cytoplasm. In terms of biological role, transports viral genome to neighboring plant cells directly through plasmosdesmata, without any budding. The movement protein allows efficient cell to cell propagation, by bypassing the host cell wall barrier. Increases plasmodesma size exclusion limit. Acts as a suppressor of RNA-mediated gene silencing, also known as post-transcriptional gene silencing (PTGS), a mechanism of plant viral defense that limits the accumulation of viral RNAs. The sequence is that of Movement and silencing protein TGBp1 from Lilium formosanum.